Here is an 80-residue protein sequence, read N- to C-terminus: DNA-binding protein HU-like (80 aa).

This sequence belongs to the bacterial histone-like protein family.

In terms of biological role, histone-like DNA-binding protein which is capable of wrapping DNA to stabilize it, and thus to prevent its denaturation under extreme environmental conditions. The protein is DNA-binding protein HU-like of Rickettsia rickettsii (strain Sheila Smith).